Reading from the N-terminus, the 134-residue chain is Small ribosomal subunit protein uS11 (134 aa).

2 disordered regions span residues 1 to 22 (MPPK…KNVA) and 114 to 134 (SIQD…RRRV). A compositionally biased stretch (basic residues) spans 9–22 (AAKKVRRKEKKNVA).

The protein belongs to the universal ribosomal protein uS11 family. Part of the 30S ribosomal subunit. Interacts with proteins S7 and S18. Binds to IF-3.

Its function is as follows. Located on the platform of the 30S subunit, it bridges several disparate RNA helices of the 16S rRNA. Forms part of the Shine-Dalgarno cleft in the 70S ribosome. This is Small ribosomal subunit protein uS11 from Streptomyces coelicolor (strain ATCC BAA-471 / A3(2) / M145).